We begin with the raw amino-acid sequence, 425 residues long: Serine/threonine-protein kinase VRK1 (425 aa).

The 292-residue stretch at 38–329 (WKLGSAVGQG…KLRGILQQGL (292 aa)) folds into the Protein kinase domain. ATP contacts are provided by residues 44–52 (VGQGGFGLL) and Lys72. Residue Asp178 is the Proton acceptor of the active site. Residues 343-425 (GVATNSTSLP…KSRGRPKKNS (83 aa)) form a disordered region. The segment covering 415 to 425 (KKSRGRPKKNS) has biased composition (basic residues).

This sequence belongs to the protein kinase superfamily. CK1 Ser/Thr protein kinase family. VRK subfamily.

The protein localises to the nucleus. Its subcellular location is the cytoplasm. The protein resides in the cajal body. The catalysed reaction is L-seryl-[protein] + ATP = O-phospho-L-seryl-[protein] + ADP + H(+). It carries out the reaction L-threonyl-[protein] + ATP = O-phospho-L-threonyl-[protein] + ADP + H(+). Functionally, serine/threonine kinase involved in the regulation of key cellular processes including the cell cycle, nuclear condensation, transcription regulation, and DNA damage response. Controls chromatin organization and remodeling by mediating phosphorylation of histone H3 on 'Thr-4' and histone H2AX (H2aXT4ph). It also phosphorylates KAT5 in response to DNA damage, promoting KAT5 association with chromatin and histone acetyltransferase activity. Is involved in the regulation of cell cycle progression of neural progenitors, and is required for proper cortical neuronal migration. Is involved in neurite elongation and branching in motor neurons, and has an essential role in Cajal bodies assembly, acting through COIL phosphorylation and the control of coilin degradation. Involved in Golgi disassembly during the cell cycle: following phosphorylation by PLK3 during mitosis, it is required to induce Golgi fragmentation. Phosphorylates BANF1: disrupts its ability to bind DNA, reduces its binding to LEM domain-containing proteins and causes its relocalization from the nucleus to the cytoplasm. Phosphorylates TP53BP1 and p53/TP53 on 'Thr-18', preventing the interaction between p53/TP53 and MDM2. Phosphorylates ATF2 which activates its transcriptional activity. Phosphorylates JUN. In Danio rerio (Zebrafish), this protein is Serine/threonine-protein kinase VRK1 (vrk1).